Consider the following 175-residue polypeptide: Bifunctional protein PyrR (175 aa).

Residues 40-41 (TR), 102-110 (DDVLYTGRT), Arg-135, and Val-159 contribute to the substrate site. The short motif at 98–110 (VIIIDDVLYTGRT) is the PRPP-binding element.

This sequence belongs to the purine/pyrimidine phosphoribosyltransferase family. PyrR subfamily. As to quaternary structure, homodimer and homohexamer; in equilibrium.

It catalyses the reaction UMP + diphosphate = 5-phospho-alpha-D-ribose 1-diphosphate + uracil. Its function is as follows. Regulates transcriptional attenuation of the pyrimidine nucleotide (pyr) operon by binding in a uridine-dependent manner to specific sites on pyr mRNA. This disrupts an antiterminator hairpin in the RNA and favors formation of a downstream transcription terminator, leading to a reduced expression of downstream genes. Functionally, also displays a weak uracil phosphoribosyltransferase activity which is not physiologically significant. In Staphylococcus aureus (strain MSSA476), this protein is Bifunctional protein PyrR.